We begin with the raw amino-acid sequence, 345 residues long: N-acetyl-gamma-glutamyl-phosphate reductase (345 aa).

Cysteine 149 is a catalytic residue.

Belongs to the NAGSA dehydrogenase family. Type 1 subfamily.

Its subcellular location is the cytoplasm. The enzyme catalyses N-acetyl-L-glutamate 5-semialdehyde + phosphate + NADP(+) = N-acetyl-L-glutamyl 5-phosphate + NADPH + H(+). It functions in the pathway amino-acid biosynthesis; L-arginine biosynthesis; N(2)-acetyl-L-ornithine from L-glutamate: step 3/4. Its function is as follows. Catalyzes the NADPH-dependent reduction of N-acetyl-5-glutamyl phosphate to yield N-acetyl-L-glutamate 5-semialdehyde. In Geobacillus stearothermophilus (Bacillus stearothermophilus), this protein is N-acetyl-gamma-glutamyl-phosphate reductase.